The sequence spans 347 residues: S-adenosylmethionine:tRNA ribosyltransferase-isomerase (347 aa).

This sequence belongs to the QueA family. In terms of assembly, monomer.

The protein localises to the cytoplasm. It carries out the reaction 7-aminomethyl-7-carbaguanosine(34) in tRNA + S-adenosyl-L-methionine = epoxyqueuosine(34) in tRNA + adenine + L-methionine + 2 H(+). The protein operates within tRNA modification; tRNA-queuosine biosynthesis. Transfers and isomerizes the ribose moiety from AdoMet to the 7-aminomethyl group of 7-deazaguanine (preQ1-tRNA) to give epoxyqueuosine (oQ-tRNA). The sequence is that of S-adenosylmethionine:tRNA ribosyltransferase-isomerase from Methylococcus capsulatus (strain ATCC 33009 / NCIMB 11132 / Bath).